The primary structure comprises 644 residues: Exoribonuclease 2 (644 aa).

One can recognise an RNB domain in the interval 189–516; sequence RQDLTALNFV…NHRLLKAVIK (328 aa). The S1 motif domain maps to 561-643; it reads NTRFAAEIID…ETRSIIARPA (83 aa).

Belongs to the RNR ribonuclease family. RNase II subfamily.

The protein localises to the cytoplasm. It carries out the reaction Exonucleolytic cleavage in the 3'- to 5'-direction to yield nucleoside 5'-phosphates.. Involved in mRNA degradation. Hydrolyzes single-stranded polyribonucleotides processively in the 3' to 5' direction. This chain is Exoribonuclease 2, found in Salmonella enteritidis PT4 (strain P125109).